The sequence spans 257 residues: Imidazole glycerol phosphate synthase subunit HisF (257 aa).

Residues Asp11 and Asp130 contribute to the active site.

Belongs to the HisA/HisF family. As to quaternary structure, heterodimer of HisH and HisF.

The protein localises to the cytoplasm. The enzyme catalyses 5-[(5-phospho-1-deoxy-D-ribulos-1-ylimino)methylamino]-1-(5-phospho-beta-D-ribosyl)imidazole-4-carboxamide + L-glutamine = D-erythro-1-(imidazol-4-yl)glycerol 3-phosphate + 5-amino-1-(5-phospho-beta-D-ribosyl)imidazole-4-carboxamide + L-glutamate + H(+). It participates in amino-acid biosynthesis; L-histidine biosynthesis; L-histidine from 5-phospho-alpha-D-ribose 1-diphosphate: step 5/9. Its function is as follows. IGPS catalyzes the conversion of PRFAR and glutamine to IGP, AICAR and glutamate. The HisF subunit catalyzes the cyclization activity that produces IGP and AICAR from PRFAR using the ammonia provided by the HisH subunit. The protein is Imidazole glycerol phosphate synthase subunit HisF of Aliivibrio fischeri (strain ATCC 700601 / ES114) (Vibrio fischeri).